The primary structure comprises 224 residues: UPF0758 protein VFMJ11_0123 (224 aa).

The MPN domain occupies 102–224; it reads ALTSPEHTKR…IVSFAERGWI (123 aa). Residues His-173, His-175, and Asp-186 each coordinate Zn(2+). The JAMM motif motif lies at 173-186; it reads HNHPSGVAEPSQAD.

Belongs to the UPF0758 family.

The chain is UPF0758 protein VFMJ11_0123 from Aliivibrio fischeri (strain MJ11) (Vibrio fischeri).